The sequence spans 119 residues: Large ribosomal subunit protein bL20 (119 aa).

This sequence belongs to the bacterial ribosomal protein bL20 family.

In terms of biological role, binds directly to 23S ribosomal RNA and is necessary for the in vitro assembly process of the 50S ribosomal subunit. It is not involved in the protein synthesizing functions of that subunit. The polypeptide is Large ribosomal subunit protein bL20 (Alcanivorax borkumensis (strain ATCC 700651 / DSM 11573 / NCIMB 13689 / SK2)).